The following is a 103-amino-acid chain: UPF0145 protein Amet_0532 (103 aa).

The protein belongs to the UPF0145 family.

This Alkaliphilus metalliredigens (strain QYMF) protein is UPF0145 protein Amet_0532.